A 336-amino-acid polypeptide reads, in one-letter code: MAENHEVYDVTIIGGGPIGLFAAFYCGMRELKTKVIEFLPRLGGKVSMFFPEKIIRDIGGIPGIAGEQLITQLKEQAATFKPDIVLNQRVTGFERLEDGTIVLESSEGEKHYTRTVILAVGMGTLEVNELDSADASRYSGKNLHYKVEKLDAFRDKHVVISGGGDTAVDWANELEPIAASVTVLHRREEFGGLESSVAKMKRSSVRVLAPYRLKHLNGTGERIESVTICQTESGLSEVIKLDELVINHGFKIDLGPMKDWGLEIEEGRIKADRHMRTNLPGVFVAGDAAHYESKLRLIAGGFTEGPTAVNSAKAYLDPQADQMAMYSTHHKKLVTQ.

FAD is bound by residues Glu37, Lys45, Phe50, Val90, Leu125, Asp287, and Thr328.

It belongs to the ferredoxin--NADP reductase type 2 family. In terms of assembly, homodimer. It depends on FAD as a cofactor.

The enzyme catalyses 2 reduced [2Fe-2S]-[ferredoxin] + NADP(+) + H(+) = 2 oxidized [2Fe-2S]-[ferredoxin] + NADPH. In Bacillus velezensis (strain DSM 23117 / BGSC 10A6 / LMG 26770 / FZB42) (Bacillus amyloliquefaciens subsp. plantarum), this protein is Ferredoxin--NADP reductase 1.